The chain runs to 1792 residues: uncharacterized protein (1792 aa).

The segment covering Met-1–Asn-28 has biased composition (low complexity). Disordered regions lie at residues Met-1–Gly-34, Thr-162–His-187, Lys-440–Ser-461, Val-544–Asn-568, Asn-736–Asn-777, Thr-837–Lys-979, Val-1044–Ser-1071, Asn-1084–Lys-1106, Thr-1160–Arg-1215, Asn-1257–Gly-1290, Leu-1651–Lys-1686, Pro-1704–Lys-1731, and Ile-1742–Asn-1761. Residues Lys-169–Lys-182 are compositionally biased toward polar residues. Positions Lys-550–Thr-559 are enriched in basic residues. Positions Pro-741 to Ser-776 are enriched in low complexity. Residues Lys-838–Lys-847 show a composition bias toward basic residues. Residues Asn-856 to Ile-873 show a composition bias toward basic and acidic residues. Low complexity predominate over residues Asn-874–Asn-924. Positions Lys-943–Lys-954 are enriched in basic residues. Residues Ile-955–Gln-966 show a composition bias toward basic and acidic residues. Over residues Ser-1045–Pro-1057 the composition is skewed to low complexity. Basic and acidic residues-rich tracts occupy residues Thr-1060–Ser-1071, Glu-1088–Lys-1106, and Asn-1166–Asp-1192. A compositionally biased stretch (basic residues) spans Arg-1205 to Arg-1215. Positions Asn-1261–Asn-1289 are enriched in low complexity. 2 stretches are compositionally biased toward basic residues: residues Lys-1660–Lys-1686 and Pro-1704–Lys-1717.

This is an uncharacterized protein from Plasmodium falciparum (isolate 3D7).